The primary structure comprises 581 residues: Tricyclene synthase Oc15, chloroplastic (581 aa).

The transit peptide at 1-68 directs the protein to the chloroplast; the sequence is MAFCISYVGA…ALCLNEHSLS (68 aa). 3 N-linked (GlcNAc...) asparagine glycosylation sites follow: N27, N206, and N319. Mg(2+) is bound by residues D338 and D342. Positions 338-342 match the DDXXD motif motif; sequence DDIFD. Residues N384 and N465 are each glycosylated (N-linked (GlcNAc...) asparagine). The Mg(2+) site is built by N482, S486, and E490. A glycan (N-linked (GlcNAc...) asparagine) is linked at N509.

The protein belongs to the terpene synthase family. Tpsg subfamily. The cofactor is Mg(2+). It depends on Mn(2+) as a cofactor. Accumulates in flowers; mostly expressed in both upper and lower petal lobes, and, to a lower extent, in tube and stamens.

Its subcellular location is the plastid. It is found in the chloroplast stroma. The catalysed reaction is (2E)-geranyl diphosphate = tricyclene + diphosphate. It carries out the reaction (2E)-geranyl diphosphate = beta-myrcene + diphosphate. The protein operates within secondary metabolite biosynthesis; terpenoid biosynthesis. In terms of biological role, contributes to floral scent emission. The polypeptide is Tricyclene synthase Oc15, chloroplastic (Oc15) (Antirrhinum majus (Garden snapdragon)).